The following is a 188-amino-acid chain: Peptide deformylase (188 aa).

2 residues coordinate Fe cation: cysteine 109 and histidine 152. Residue glutamate 153 is part of the active site. A Fe cation-binding site is contributed by histidine 156.

Belongs to the polypeptide deformylase family. It depends on Fe(2+) as a cofactor.

The catalysed reaction is N-terminal N-formyl-L-methionyl-[peptide] + H2O = N-terminal L-methionyl-[peptide] + formate. Removes the formyl group from the N-terminal Met of newly synthesized proteins. Requires at least a dipeptide for an efficient rate of reaction. N-terminal L-methionine is a prerequisite for activity but the enzyme has broad specificity at other positions. The polypeptide is Peptide deformylase (Chloroflexus aggregans (strain MD-66 / DSM 9485)).